The following is a 93-amino-acid chain: Acylphosphatase (93 aa).

In terms of domain architecture, Acylphosphatase-like spans 5 to 93; the sequence is CIIAWVHGRV…EELTGFRIRY (89 aa). Residues arginine 20 and asparagine 38 contribute to the active site.

Belongs to the acylphosphatase family.

It carries out the reaction an acyl phosphate + H2O = a carboxylate + phosphate + H(+). This chain is Acylphosphatase (acyP), found in Citrobacter koseri (strain ATCC BAA-895 / CDC 4225-83 / SGSC4696).